The chain runs to 66 residues: Large ribosomal subunit protein bL31 (66 aa).

Positions 16, 18, 36, and 39 each coordinate Zn(2+).

It belongs to the bacterial ribosomal protein bL31 family. Type A subfamily. As to quaternary structure, part of the 50S ribosomal subunit. Requires Zn(2+) as cofactor.

Its function is as follows. Binds the 23S rRNA. This is Large ribosomal subunit protein bL31 from Desulforamulus reducens (strain ATCC BAA-1160 / DSM 100696 / MI-1) (Desulfotomaculum reducens).